The sequence spans 78 residues: Conotoxin TsMEKL-P012 (78 aa).

Residues 1-19 (MEKLTILLLLAAVLVLAQA) form the signal peptide. The propeptide occupies 20-38 (LIKKGGGEKRQKEKINFLS). Disulfide bonds link cysteine 52/cysteine 66, cysteine 59/cysteine 70, and cysteine 65/cysteine 75.

It belongs to the conotoxin O2 superfamily. Expressed by the venom duct.

Its subcellular location is the secreted. This chain is Conotoxin TsMEKL-P012, found in Conus tessulatus (Tessellate cone).